Reading from the N-terminus, the 388-residue chain is Chorismate synthase (388 aa).

Positions 39 and 45 each coordinate NADP(+). Residues 130–132, 251–252, Gly-296, 311–315, and Arg-337 each bind FMN; these read RSS, NA, and KPIPT.

The protein belongs to the chorismate synthase family. Homotetramer. Requires FMNH2 as cofactor.

It catalyses the reaction 5-O-(1-carboxyvinyl)-3-phosphoshikimate = chorismate + phosphate. It participates in metabolic intermediate biosynthesis; chorismate biosynthesis; chorismate from D-erythrose 4-phosphate and phosphoenolpyruvate: step 7/7. Its function is as follows. Catalyzes the anti-1,4-elimination of the C-3 phosphate and the C-6 proR hydrogen from 5-enolpyruvylshikimate-3-phosphate (EPSP) to yield chorismate, which is the branch point compound that serves as the starting substrate for the three terminal pathways of aromatic amino acid biosynthesis. This reaction introduces a second double bond into the aromatic ring system. This is Chorismate synthase from Streptococcus sanguinis (strain SK36).